The following is a 29-amino-acid chain: GFPTCGETCTLGTCNTPGCTCSWPICTRD.

Residues 1-29 (GFPTCGETCTLGTCNTPGCTCSWPICTRD) constitute a cross-link (cyclopeptide (Gly-Asp)). 3 disulfide bridges follow: Cys5/Cys19, Cys9/Cys21, and Cys14/Cys26.

This sequence belongs to the cyclotide family. Moebius subfamily. This is a cyclic peptide.

In terms of biological role, probably participates in a plant defense mechanism. This chain is Cyclotide mang-A, found in Melicytus angustifolius (Hymenanthera angustifolia).